The primary structure comprises 259 residues: Proteasome subunit alpha (259 aa).

It belongs to the peptidase T1A family. The 20S proteasome core is composed of 14 alpha and 14 beta subunits that assemble into four stacked heptameric rings, resulting in a barrel-shaped structure. The two inner rings, each composed of seven catalytic beta subunits, are sandwiched by two outer rings, each composed of seven alpha subunits. The catalytic chamber with the active sites is on the inside of the barrel. Has a gated structure, the ends of the cylinder being occluded by the N-termini of the alpha-subunits. Is capped at one or both ends by the proteasome regulatory ATPase, PAN.

It is found in the cytoplasm. With respect to regulation, the formation of the proteasomal ATPase PAN-20S proteasome complex, via the docking of the C-termini of PAN into the intersubunit pockets in the alpha-rings, triggers opening of the gate for substrate entry. Interconversion between the open-gate and close-gate conformations leads to a dynamic regulation of the 20S proteasome proteolysis activity. Functionally, component of the proteasome core, a large protease complex with broad specificity involved in protein degradation. The sequence is that of Proteasome subunit alpha from Methanococcus vannielii (strain ATCC 35089 / DSM 1224 / JCM 13029 / OCM 148 / SB).